The following is a 93-amino-acid chain: Large ribosomal subunit protein bL31B (93 aa).

This sequence belongs to the bacterial ribosomal protein bL31 family. Type B subfamily. As to quaternary structure, part of the 50S ribosomal subunit.

In Pseudomonas syringae pv. syringae (strain B728a), this protein is Large ribosomal subunit protein bL31B.